Consider the following 389-residue polypeptide: Leucine aminopeptidase 1 (389 aa).

The first 18 residues, 1 to 18, serve as a signal peptide directing secretion; sequence MKSAALLLPLYTAAFAAA. Positions 19-89 are excised as a propeptide; that stretch reads AFHHEHAQAV…TLNHRINAES (71 aa). N-linked (GlcNAc...) asparagine glycosylation is found at N99, N146, and N156. Residues H188, D207, E246, and D273 each contribute to the Zn(2+) site. C322 and C326 are disulfide-bonded. H355 is a Zn(2+) binding site.

This sequence belongs to the peptidase M28 family. M28E subfamily. Monomer. Zn(2+) is required as a cofactor.

The protein resides in the secreted. Extracellular aminopeptidase that allows assimilation of proteinaceous substrates. The sequence is that of Leucine aminopeptidase 1 (lap1) from Pyrenophora tritici-repentis (strain Pt-1C-BFP) (Wheat tan spot fungus).